The following is a 386-amino-acid chain: Ovalbumin (386 aa).

Position 2 is an N-acetylglycine (G2). Phosphoserine is present on S69. C74 and C121 are disulfide-bonded. Residue N293 is glycosylated (N-linked (GlcNAc...) asparagine). S345 carries the phosphoserine modification.

Belongs to the serpin family. Ov-serpin subfamily. The N-terminus is blocked.

The protein localises to the secreted. In terms of biological role, storage protein of egg white. Lacks protease inhibitory activity. The sequence is that of Ovalbumin (SERPINB14) from Dromaius novaehollandiae (Emu).